The sequence spans 660 residues: tRNA 5-methylaminomethyl-2-thiouridine biosynthesis bifunctional protein MnmC (660 aa).

Positions 1-241 (MNDHPAQDAF…KREILRGHLQ (241 aa)) are tRNA (mnm(5)s(2)U34)-methyltransferase. The interval 268 to 660 (IGAGLAGCAT…FLLRKLIRGT (393 aa)) is FAD-dependent cmnm(5)s(2)U34 oxidoreductase.

It in the N-terminal section; belongs to the methyltransferase superfamily. tRNA (mnm(5)s(2)U34)-methyltransferase family. This sequence in the C-terminal section; belongs to the DAO family. Requires FAD as cofactor.

The protein localises to the cytoplasm. It carries out the reaction 5-aminomethyl-2-thiouridine(34) in tRNA + S-adenosyl-L-methionine = 5-methylaminomethyl-2-thiouridine(34) in tRNA + S-adenosyl-L-homocysteine + H(+). In terms of biological role, catalyzes the last two steps in the biosynthesis of 5-methylaminomethyl-2-thiouridine (mnm(5)s(2)U) at the wobble position (U34) in tRNA. Catalyzes the FAD-dependent demodification of cmnm(5)s(2)U34 to nm(5)s(2)U34, followed by the transfer of a methyl group from S-adenosyl-L-methionine to nm(5)s(2)U34, to form mnm(5)s(2)U34. The sequence is that of tRNA 5-methylaminomethyl-2-thiouridine biosynthesis bifunctional protein MnmC from Stutzerimonas stutzeri (strain A1501) (Pseudomonas stutzeri).